A 349-amino-acid polypeptide reads, in one-letter code: Methylthioribose-1-phosphate isomerase (349 aa).

Substrate-binding positions include 51-53 (RGA), arginine 94, and glutamine 199. Aspartate 240 acts as the Proton donor in catalysis. Position 250–251 (250–251 (NK)) interacts with substrate.

This sequence belongs to the eIF-2B alpha/beta/delta subunits family. MtnA subfamily. In terms of assembly, homodimer.

The enzyme catalyses 5-(methylsulfanyl)-alpha-D-ribose 1-phosphate = 5-(methylsulfanyl)-D-ribulose 1-phosphate. It participates in amino-acid biosynthesis; L-methionine biosynthesis via salvage pathway; L-methionine from S-methyl-5-thio-alpha-D-ribose 1-phosphate: step 1/6. Functionally, catalyzes the interconversion of methylthioribose-1-phosphate (MTR-1-P) into methylthioribulose-1-phosphate (MTRu-1-P). This chain is Methylthioribose-1-phosphate isomerase, found in Bacillus cytotoxicus (strain DSM 22905 / CIP 110041 / 391-98 / NVH 391-98).